The sequence spans 482 residues: Sugar transporter ERD6-like 16 (482 aa).

The next 12 membrane-spanning stretches (helical) occupy residues 42 to 62, 80 to 100, 117 to 137, 142 to 162, 173 to 193, 197 to 217, 280 to 300, 316 to 336, 344 to 364, 382 to 402, 413 to 433, and 443 to 463; these read LMVLFSTFVAVCGSFEFGSCV, LAEFSMFGSILTIGAMLGAVM, SACFCITGWLAVFFTKGALLL, FFTGYGIGVFSYVVPVYIAEI, TLNQLMIVIGSSVSFLIGSLI, TLALTGLAPCIVLLFGLCFIP, VIIGVSLMVFQQFVGINGIGF, LGTIAIACVQVPITVLGTILI, LIMISAGGIFLGCILTGTSFL, GVLIYVAAFSIGMGPVPWVIM, IAGSLVVLVNWSGAWAVSYTF, and GTFYLYSAFAAATIIFVAKMV.

The protein belongs to the major facilitator superfamily. Sugar transporter (TC 2.A.1.1) family.

The protein localises to the membrane. In terms of biological role, sugar transporter. The protein is Sugar transporter ERD6-like 16 of Arabidopsis thaliana (Mouse-ear cress).